Here is a 243-residue protein sequence, read N- to C-terminus: Aldehyde decarbonylase (243 aa).

5 residues coordinate Fe cation: Glu45, Glu73, His76, Glu128, and His160.

It belongs to the aldehyde decarbonylase family. Binds 2 metal cations per subunit. The catalytic dinuclear metal-binding site could be either a di-iron or a manganese-iron cofactor. serves as cofactor.

It catalyses the reaction a long-chain fatty aldehyde + 2 NADPH + O2 + H(+) = a long-chain alkane + formate + 2 NADP(+) + H2O. Catalyzes the decarbonylation of fatty aldehydes to alkanes. Requires the presence of ferredoxin, ferredoxin reductase and NADPH for in vitro decarbonylase activity. Involved in the biosynthesis of alkanes, mainly heptadecane and pentadecane. The protein is Aldehyde decarbonylase of Prochlorococcus marinus (strain MIT 9313).